We begin with the raw amino-acid sequence, 493 residues long: GTPase Der (493 aa).

2 EngA-type G domains span residues 3-166 (PVVA…AEAL) and 206-379 (IKLA…KSAT). GTP is bound by residues 9–16 (GRPNVGKS), 56–60 (DTGGI), 118–121 (NKVD), 212–219 (GRPNVGKS), 259–263 (DTAGV), and 324–327 (NKWD). Residues 380–464 (TRVGTSVLTR…PIRIQFQNSE (85 aa)) enclose the KH-like domain.

It belongs to the TRAFAC class TrmE-Era-EngA-EngB-Septin-like GTPase superfamily. EngA (Der) GTPase family. As to quaternary structure, associates with the 50S ribosomal subunit.

In terms of biological role, GTPase that plays an essential role in the late steps of ribosome biogenesis. The chain is GTPase Der from Vibrio atlanticus (strain LGP32) (Vibrio splendidus (strain Mel32)).